The sequence spans 688 residues: NADH-ubiquinone oxidoreductase 75 kDa subunit (688 aa).

A 2Fe-2S ferredoxin-type domain is found at 1-85 (MIIRFKINEI…DESIETEIDE (85 aa)). [2Fe-2S] cluster-binding residues include Cys38, Cys49, Cys52, and Cys66. One can recognise a 4Fe-4S His(Cys)3-ligated-type domain in the interval 85-124 (EILKAREGVMEFLLINHPLDCPICDQGGECDLQEQTLAYG). [4Fe-4S] cluster contacts are provided by His101, Cys105, Cys108, Cys114, Cys153, Cys156, Cys159, and Cys204. The region spanning 223–279 (LKNIKGIDIFDTLLTPINYQVKGGEIFRILPRINDRINEEWITDKVRFHYESYKIIE) is the 4Fe-4S Mo/W bis-MGD-type domain.

It belongs to the complex I 75 kDa subunit family. In terms of assembly, complex I is composed of about 45 different subunits. [2Fe-2S] cluster is required as a cofactor. [4Fe-4S] cluster serves as cofactor.

The protein localises to the mitochondrion inner membrane. It carries out the reaction a ubiquinone + NADH + 5 H(+)(in) = a ubiquinol + NAD(+) + 4 H(+)(out). In terms of biological role, core subunit of the mitochondrial membrane respiratory chain NADH dehydrogenase (Complex I) that is believed to belong to the minimal assembly required for catalysis. Complex I functions in the transfer of electrons from NADH to the respiratory chain. The immediate electron acceptor for the enzyme is believed to be ubiquinone. This is the largest subunit of complex I and it is a component of the iron-sulfur (IP) fragment of the enzyme. It may form part of the active site crevice where NADH is oxidized. This is NADH-ubiquinone oxidoreductase 75 kDa subunit (nad11) from Dictyostelium discoideum (Social amoeba).